A 488-amino-acid polypeptide reads, in one-letter code: Glutamyl-tRNA(Gln) amidotransferase subunit B, mitochondrial (488 aa).

The protein belongs to the GatB/GatE family. GatB subfamily. In terms of assembly, subunit of the heterotrimeric GatFAB amidotransferase (AdT) complex, composed of A, B and F subunits.

It is found in the mitochondrion. The catalysed reaction is L-glutamyl-tRNA(Gln) + L-glutamine + ATP + H2O = L-glutaminyl-tRNA(Gln) + L-glutamate + ADP + phosphate + H(+). Its function is as follows. Allows the formation of correctly charged Gln-tRNA(Gln) through the transamidation of misacylated Glu-tRNA(Gln) in the mitochondria. The reaction takes place in the presence of glutamine and ATP through an activated gamma-phospho-Glu-tRNA(Gln). The sequence is that of Glutamyl-tRNA(Gln) amidotransferase subunit B, mitochondrial from Candida albicans (strain WO-1) (Yeast).